The primary structure comprises 154 residues: Iron-sulfur cluster assembly 2 homolog, mitochondrial (154 aa).

The N-terminal 8 residues, 1-8 (MAASRALS), are a transit peptide targeting the mitochondrion. Positions 79, 144, and 146 each coordinate Fe cation.

The protein belongs to the HesB/IscA family. Heterotetramer; forms a dimer of dimers with IBA57. Interacts with [2Fe-2S]-ISCA2 forming the heterodimer [2Fe- 2S]-ISCA2-IBA57 complex; [2Fe-2S] cluster binding is absolutely required to promote the complex formation.

The protein resides in the mitochondrion. Involved in the maturation of mitochondrial 4Fe-4S proteins functioning late in the iron-sulfur cluster assembly pathway. May be involved in the binding of an intermediate of Fe/S cluster assembly. The chain is Iron-sulfur cluster assembly 2 homolog, mitochondrial (Isca2) from Mus musculus (Mouse).